A 73-amino-acid polypeptide reads, in one-letter code: Exodeoxyribonuclease 7 small subunit (73 aa).

It belongs to the XseB family. In terms of assembly, heterooligomer composed of large and small subunits.

It is found in the cytoplasm. It catalyses the reaction Exonucleolytic cleavage in either 5'- to 3'- or 3'- to 5'-direction to yield nucleoside 5'-phosphates.. Functionally, bidirectionally degrades single-stranded DNA into large acid-insoluble oligonucleotides, which are then degraded further into small acid-soluble oligonucleotides. The chain is Exodeoxyribonuclease 7 small subunit from Clostridium novyi (strain NT).